We begin with the raw amino-acid sequence, 112 residues long: UPF0060 membrane protein XOO1694 (112 aa).

A run of 4 helical transmembrane segments spans residues L8 to W28, G32 to L52, V62 to V82, and L92 to A112.

The protein belongs to the UPF0060 family.

Its subcellular location is the cell inner membrane. This Xanthomonas oryzae pv. oryzae (strain MAFF 311018) protein is UPF0060 membrane protein XOO1694.